A 332-amino-acid chain; its full sequence is RNA polymerase sigma-B factor (332 aa).

Residues 125–138 (DLIQEGALGLERGV) carry the Polymerase core binding motif. Positions 294 to 313 (LVQISQRMGISRERVRQVEK) form a DNA-binding region, H-T-H motif.

This sequence belongs to the sigma-70 factor family.

Functionally, sigma factors are initiation factors that promote the attachment of RNA polymerase to specific initiation sites and are then released. This chain is RNA polymerase sigma-B factor (sigB), found in Nostoc sp. (strain PCC 7120 / SAG 25.82 / UTEX 2576).